Here is a 351-residue protein sequence, read N- to C-terminus: Photosystem II D2 protein (351 aa).

Residues 39–59 (TAYLAIGGWLTGTTFVTSWYT) form a helical membrane-spanning segment. Position 116 (His116) interacts with chlorophyll a. Residues 123 to 139 (GFMLRQFEIARLVGIRP) traverse the membrane as a helical segment. Gln128 and Asn141 together coordinate pheophytin a. A helical membrane pass occupies residues 151–164 (VFVSVFLMYPLGQS). Chlorophyll a is bound at residue His196. The chain crosses the membrane as a helical span at residues 206–226 (GALLCAIHGATVENTLFEDGE). A plastoquinone contacts are provided by His213 and Phe260. His213 contributes to the Fe cation binding site. A Fe cation-binding site is contributed by His267. A helical membrane pass occupies residues 277–293 (GLWTSSIGIIGLALNLR).

It belongs to the reaction center PufL/M/PsbA/D family. In terms of assembly, PSII is composed of 1 copy each of membrane proteins PsbA, PsbB, PsbC, PsbD, PsbE, PsbF, PsbH, PsbI, PsbJ, PsbK, PsbL, PsbM, PsbT, PsbX, PsbY, PsbZ, Psb30/Ycf12, peripheral proteins PsbO, CyanoQ (PsbQ), PsbU, PsbV and a large number of cofactors. It forms dimeric complexes. Requires The D1/D2 heterodimer binds P680, chlorophylls that are the primary electron donor of PSII, and subsequent electron acceptors. It shares a non-heme iron and each subunit binds pheophytin, quinone, additional chlorophylls, carotenoids and lipids. There is also a Cl(-1) ion associated with D1 and D2, which is required for oxygen evolution. The PSII complex binds additional chlorophylls, carotenoids and specific lipids. as cofactor.

It localises to the cellular thylakoid membrane. It catalyses the reaction 2 a plastoquinone + 4 hnu + 2 H2O = 2 a plastoquinol + O2. Functionally, photosystem II (PSII) is a light-driven water:plastoquinone oxidoreductase that uses light energy to abstract electrons from H(2)O, generating O(2) and a proton gradient subsequently used for ATP formation. It consists of a core antenna complex that captures photons, and an electron transfer chain that converts photonic excitation into a charge separation. The D1/D2 (PsbA/PsbD) reaction center heterodimer binds P680, the primary electron donor of PSII as well as several subsequent electron acceptors. D2 is needed for assembly of a stable PSII complex. This Synechococcus sp. (strain WH7803) protein is Photosystem II D2 protein.